A 32-amino-acid chain; its full sequence is Calcitonin (32 aa).

A disulfide bridge connects residues Cys1 and Cys7. Pro32 is modified (proline amide).

Belongs to the calcitonin family.

The protein localises to the secreted. In terms of biological role, causes a rapid but short-lived drop in the level of calcium and phosphate in blood by promoting the incorporation of those ions in the bones. The chain is Calcitonin from Anguilla japonica (Japanese eel).